A 237-amino-acid chain; its full sequence is Proteasome subunit alpha type-5 (237 aa).

Belongs to the peptidase T1A family. The 26S proteasome consists of a 20S proteasome core and two 19S regulatory subunits. The 20S proteasome core is composed of 28 subunits that are arranged in four stacked rings, resulting in a barrel-shaped structure. The two end rings are each formed by seven alpha subunits, and the two central rings are each formed by seven beta subunits. The catalytic chamber with the active sites is on the inside of the barrel.

Its subcellular location is the cytoplasm. The protein localises to the nucleus. Functionally, the proteasome is a multicatalytic proteinase complex which is characterized by its ability to cleave peptides with Arg, Phe, Tyr, Leu, and Glu adjacent to the leaving group at neutral or slightly basic pH. The proteasome has an ATP-dependent proteolytic activity. This chain is Proteasome subunit alpha type-5 (PAE1), found in Oryza sativa subsp. japonica (Rice).